The sequence spans 304 residues: MTTEIRNIKLVQKIASGAFGDIFIGQNTVTNQTVAVKLEKKAHYGQLKHEYGVYKALGGTRTPRIYEYGKILYENVYVNGLVMELMGKSLEQLFVTCSRRFSLKTVLMLGERMVDNVEYLHHRNYVHRDIKPDNFVFDVQGDRLYLIDYGLAKEFRNPMTFKHREMRTDKSLTGTARYASLRTHQGYEQSRRDDLESVGFCMVYFLKGRLPWQGLKAKTKQEKYDRIRESKESISLYELCMGLPKEIHSFCFYVRNLGYEDMPNYAYLRTLLSDALRQRGLRSDGVFDWMVRTPSDSMGDLEIL.

Residues I8–L304 enclose the Protein kinase domain. ATP is bound by residues I14–I22 and K37. The active-site Proton acceptor is D129.

Belongs to the protein kinase superfamily. CK1 Ser/Thr protein kinase family. Casein kinase I subfamily.

The protein localises to the nucleus. The catalysed reaction is L-seryl-[protein] + ATP = O-phospho-L-seryl-[protein] + ADP + H(+). It carries out the reaction L-threonyl-[protein] + ATP = O-phospho-L-threonyl-[protein] + ADP + H(+). Functionally, involved in DNA repair. May regulate the activity of protein(s) involved in double strand break repair caused by gamma rays. The protein is Probable casein kinase I homolog ECU03_0910 of Encephalitozoon cuniculi (strain GB-M1) (Microsporidian parasite).